The following is an 89-amino-acid chain: MNMYIEKLTNLLLEKNEMISYIQAKTWVELLWSDFEATYAKAGHAYQGEKMTEKIVTQWIENYGGQLHLFQSSRNDVNDYLNQSRGLLH.

This is an uncharacterized protein from Bacillus subtilis (strain 168).